The sequence spans 217 residues: Adapter protein MecA (217 aa).

The protein belongs to the MecA family. Homodimer.

Functionally, enables the recognition and targeting of unfolded and aggregated proteins to the ClpC protease or to other proteins involved in proteolysis. The chain is Adapter protein MecA from Listeria monocytogenes serotype 4b (strain CLIP80459).